The chain runs to 457 residues: Reticulon-like protein B18 (457 aa).

Residues 94–183 (AAVTARRSKT…SPSSDQPQDV (90 aa)) form a disordered region. Residues 124 to 136 (LRSEAMVDTKENT) are compositionally biased toward basic and acidic residues. Over residues 149–163 (NQRKQKKLGRSKKEK) the composition is skewed to basic residues. The segment covering 166–183 (SVPLLASPSPSSDQPQDV) has biased composition (low complexity). Residues 195–385 (ISDLIMWRDV…AFWNLTSLKT (191 aa)) form the Reticulon domain. Transmembrane regions (helical) follow at residues 208–228 (TLWF…AKGF), 230–250 (FSVF…SFLS), 314–334 (YGYL…SFTI), and 377–397 (FWNL…VVVI). Residues 407–457 (DSEDEEEKKQQEKTHPEQQKSPEDKSTSPRSAEEEQALVLVAETKAPKKLY) form a disordered region. Positions 413 to 439 (EKKQQEKTHPEQQKSPEDKSTSPRSAE) are enriched in basic and acidic residues.

The protein resides in the endoplasmic reticulum membrane. This Arabidopsis thaliana (Mouse-ear cress) protein is Reticulon-like protein B18 (RTNLB18).